The sequence spans 415 residues: Serine hydroxymethyltransferase (415 aa).

(6S)-5,6,7,8-tetrahydrofolate contacts are provided by residues Leu117 and 121–123 (GHL). At Lys226 the chain carries N6-(pyridoxal phosphate)lysine. 349 to 351 (SPF) contributes to the (6S)-5,6,7,8-tetrahydrofolate binding site.

Belongs to the SHMT family. Homodimer. Requires pyridoxal 5'-phosphate as cofactor.

It localises to the cytoplasm. It carries out the reaction (6R)-5,10-methylene-5,6,7,8-tetrahydrofolate + glycine + H2O = (6S)-5,6,7,8-tetrahydrofolate + L-serine. The protein operates within one-carbon metabolism; tetrahydrofolate interconversion. It functions in the pathway amino-acid biosynthesis; glycine biosynthesis; glycine from L-serine: step 1/1. Its function is as follows. Catalyzes the reversible interconversion of serine and glycine with tetrahydrofolate (THF) serving as the one-carbon carrier. This reaction serves as the major source of one-carbon groups required for the biosynthesis of purines, thymidylate, methionine, and other important biomolecules. Also exhibits THF-independent aldolase activity toward beta-hydroxyamino acids, producing glycine and aldehydes, via a retro-aldol mechanism. In Geobacter sp. (strain M21), this protein is Serine hydroxymethyltransferase.